The following is a 110-amino-acid chain: Large ribosomal subunit protein P2B (110 aa).

A compositionally biased stretch (low complexity) spans 73–88 (TPAAGGAAGAEATSAA). The interval 73–110 (TPAAGGAAGAEATSAAEEAKEEEAAEESDEDMGFGLFD) is disordered. A compositionally biased stretch (acidic residues) spans 91 to 104 (AKEEEAAEESDEDM). Phosphoserine is present on serine 100.

Belongs to the eukaryotic ribosomal protein P1/P2 family. In terms of assembly, component of the large ribosomal subunit (LSU). Mature yeast ribosomes consist of a small (40S) and a large (60S) subunit. The 40S small subunit contains 1 molecule of ribosomal RNA (18S rRNA) and at least 33 different proteins. The large 60S subunit contains 3 rRNA molecules (25S, 5.8S and 5S rRNA) and at least 46 different proteins. The acidic ribosomal P-proteins form the stalk structure of the 60S subunit. They are organized as a pentameric complex in which uL10/P0 interacts with 2 heterodimers of P1 and P2 proteins.

The protein resides in the cytoplasm. Functionally, component of the ribosome, a large ribonucleoprotein complex responsible for the synthesis of proteins in the cell. The small ribosomal subunit (SSU) binds messenger RNAs (mRNAs) and translates the encoded message by selecting cognate aminoacyl-transfer RNA (tRNA) molecules. The large subunit (LSU) contains the ribosomal catalytic site termed the peptidyl transferase center (PTC), which catalyzes the formation of peptide bonds, thereby polymerizing the amino acids delivered by tRNAs into a polypeptide chain. The nascent polypeptides leave the ribosome through a tunnel in the LSU and interact with protein factors that function in enzymatic processing, targeting, and the membrane insertion of nascent chains at the exit of the ribosomal tunnel. The protein is Large ribosomal subunit protein P2B (rpp202) of Schizosaccharomyces pombe (strain 972 / ATCC 24843) (Fission yeast).